The chain runs to 59 residues: Cecropin-C type 1 (59 aa).

Positions 1–23 (MNFTKIFVLIAMAALLLVGQSEA) are cleaved as a signal peptide.

Its subcellular location is the secreted. Functionally, cecropins have lytic and antibacterial activity against several Gram-positive and Gram-negative bacteria. In Aedes albopictus (Asian tiger mosquito), this protein is Cecropin-C type 1 (CECC1).